A 304-amino-acid polypeptide reads, in one-letter code: Protease HtpX homolog (304 aa).

2 consecutive transmembrane segments (helical) span residues 14-34 (VFIV…IGII) and 39-59 (YLNG…IMVM). Position 144 (His144) interacts with Zn(2+). The active site involves Glu145. His148 contacts Zn(2+). 2 consecutive transmembrane segments (helical) span residues 161-181 (IALV…IFWG) and 202-222 (LIIY…ATAI). Glu231 serves as a coordination point for Zn(2+). The disordered stretch occupies residues 276-295 (SPLKSKKDKPGIFDSHPPIS).

The protein belongs to the peptidase M48B family. It depends on Zn(2+) as a cofactor.

Its subcellular location is the cell membrane. This chain is Protease HtpX homolog, found in Listeria welshimeri serovar 6b (strain ATCC 35897 / DSM 20650 / CCUG 15529 / CIP 8149 / NCTC 11857 / SLCC 5334 / V8).